We begin with the raw amino-acid sequence, 185 residues long: Prorelaxin (185 aa).

The signal sequence occupies residues M1–A24. Cystine bridges form between C35-C172, C47-C185, and C171-C176. The propeptide at S56–S157 is connecting peptide.

The protein belongs to the insulin family. As to quaternary structure, heterodimer of a B chain and an A chain linked by two disulfide bonds.

It localises to the secreted. Functionally, relaxin is an ovarian hormone that acts with estrogen to produce dilatation of the birth canal in many mammals. May be involved in remodeling of connective tissues during pregnancy, promoting growth of pubic ligaments and ripening of the cervix. This is Prorelaxin (RLN) from Macaca mulatta (Rhesus macaque).